We begin with the raw amino-acid sequence, 627 residues long: uncharacterized protein (627 aa).

2 disordered regions span residues 441 to 466 (EAVP…QGEN) and 608 to 627 (DLRG…TEDR). Residues 615 to 627 (DYERGKGESTEDR) are compositionally biased toward basic and acidic residues.

This is an uncharacterized protein from Homo sapiens (Human).